A 417-amino-acid polypeptide reads, in one-letter code: Tryptophan synthase beta chain (417 aa).

At Lys-99 the chain carries N6-(pyridoxal phosphate)lysine.

This sequence belongs to the TrpB family. In terms of assembly, tetramer of two alpha and two beta chains. It depends on pyridoxal 5'-phosphate as a cofactor.

It catalyses the reaction (1S,2R)-1-C-(indol-3-yl)glycerol 3-phosphate + L-serine = D-glyceraldehyde 3-phosphate + L-tryptophan + H2O. It participates in amino-acid biosynthesis; L-tryptophan biosynthesis; L-tryptophan from chorismate: step 5/5. The beta subunit is responsible for the synthesis of L-tryptophan from indole and L-serine. The chain is Tryptophan synthase beta chain (trpB) from Corynebacterium glutamicum (strain ATCC 13032 / DSM 20300 / JCM 1318 / BCRC 11384 / CCUG 27702 / LMG 3730 / NBRC 12168 / NCIMB 10025 / NRRL B-2784 / 534).